We begin with the raw amino-acid sequence, 96 residues long: Small ribosomal subunit protein uS19 (96 aa).

It belongs to the universal ribosomal protein uS19 family.

Protein S19 forms a complex with S13 that binds strongly to the 16S ribosomal RNA. In Gemmatimonas aurantiaca (strain DSM 14586 / JCM 11422 / NBRC 100505 / T-27), this protein is Small ribosomal subunit protein uS19.